The following is a 258-amino-acid chain: Axonemal dynein light intermediate polypeptide 1 (258 aa).

Disordered stretches follow at residues 1-60 (MIPP…CVPD) and 202-231 (DLER…EEKK). Positions 176–255 (MRKALQAEQG…LKAQLEGIIA (80 aa)) form a coiled coil.

Belongs to the inner dynein arm light chain family. As to quaternary structure, interacts with CFAP45. Interacts with DYNC1H1. Predominantly expressed in the testis, also detected at lower levels in several tissues expressing cilia. Strongly expressed in elongating spermatid cells (at protein level).

It localises to the cell projection. The protein resides in the cilium. It is found in the flagellum. Its subcellular location is the dynein axonemal particle. The protein localises to the cytoplasm. In terms of biological role, involved in sperm flagellum assembly. The protein is Axonemal dynein light intermediate polypeptide 1 of Mus musculus (Mouse).